Consider the following 660-residue polypeptide: Translation factor GUF1 homolog, mitochondrial (660 aa).

The tr-type G domain maps to Glu62–Thr243. GTP-binding positions include Ala71–Ser78, Asp136–His140, and Asn190–Asp193.

It belongs to the TRAFAC class translation factor GTPase superfamily. Classic translation factor GTPase family. LepA subfamily.

The protein localises to the mitochondrion inner membrane. The catalysed reaction is GTP + H2O = GDP + phosphate + H(+). Its function is as follows. Promotes mitochondrial protein synthesis. May act as a fidelity factor of the translation reaction, by catalyzing a one-codon backward translocation of tRNAs on improperly translocated ribosomes. Binds to mitochondrial ribosomes in a GTP-dependent manner. In Trichoplax adhaerens (Trichoplax reptans), this protein is Translation factor GUF1 homolog, mitochondrial.